We begin with the raw amino-acid sequence, 335 residues long: MVREKITVSTRTLQWKCVESAADSKRLLYGRFILSPLMKGQADTIGIAMRRALLGEIEGTCITRAKSEKISHEYSTIMGIQESVHEILMNLKEIVLRSNLYGTCEASICVRGPGYVTAQDIILPPYVEILDNTQHIASLTEPIELVIGLQIEKNRGYLIKAPNTFQDGSYPIDPVFMPVRNANHSIHSYENGNKEILFLEIWTNGSLTPKEALYEASRNLIDLLIPFLHTKEENLNLEGNQHMVPLPPFTFYDKLAKLTKNKKKMALKSIFIDQSELPPRIYNCLKRSNIYTLLDLLNNSQEDLMKMEHFRIEDVKQILGILEKNFVIDLPKNKF.

The segment at 1–231 (MVREKITVST…DLLIPFLHTK (231 aa)) is alpha N-terminal domain (alpha-NTD). The alpha C-terminal domain (alpha-CTD) stretch occupies residues 263 to 335 (KKMALKSIFI…FVIDLPKNKF (73 aa)).

Belongs to the RNA polymerase alpha chain family. In plastids the minimal PEP RNA polymerase catalytic core is composed of four subunits: alpha, beta, beta', and beta''. When a (nuclear-encoded) sigma factor is associated with the core the holoenzyme is formed, which can initiate transcription.

It is found in the plastid. The protein resides in the chloroplast. It catalyses the reaction RNA(n) + a ribonucleoside 5'-triphosphate = RNA(n+1) + diphosphate. DNA-dependent RNA polymerase catalyzes the transcription of DNA into RNA using the four ribonucleoside triphosphates as substrates. In Lactuca sativa (Garden lettuce), this protein is DNA-directed RNA polymerase subunit alpha.